We begin with the raw amino-acid sequence, 185 residues long: UPF0669 protein C6orf120 homolog (185 aa).

Positions 1–23 are cleaved as a signal peptide; that stretch reads MATPWRRALLMILASQVVTLVKC. The N-linked (GlcNAc...) asparagine glycan is linked to asparagine 47.

Belongs to the UPF0669 family.

The protein resides in the secreted. May be involved in induction of apoptosis in CD4(+) T-cells, but not CD8(+) T-cells or hepatocytes. In Mus musculus (Mouse), this protein is UPF0669 protein C6orf120 homolog.